Consider the following 496-residue polypeptide: Probable cytosol aminopeptidase (496 aa).

Mn(2+)-binding residues include K268 and D273. K280 is an active-site residue. Mn(2+) contacts are provided by D291, D350, and E352. Residue R354 is part of the active site.

Belongs to the peptidase M17 family. Requires Mn(2+) as cofactor.

Its subcellular location is the cytoplasm. It catalyses the reaction Release of an N-terminal amino acid, Xaa-|-Yaa-, in which Xaa is preferably Leu, but may be other amino acids including Pro although not Arg or Lys, and Yaa may be Pro. Amino acid amides and methyl esters are also readily hydrolyzed, but rates on arylamides are exceedingly low.. The catalysed reaction is Release of an N-terminal amino acid, preferentially leucine, but not glutamic or aspartic acids.. Its function is as follows. Presumably involved in the processing and regular turnover of intracellular proteins. Catalyzes the removal of unsubstituted N-terminal amino acids from various peptides. In Thioalkalivibrio sulfidiphilus (strain HL-EbGR7), this protein is Probable cytosol aminopeptidase.